A 141-amino-acid chain; its full sequence is Hemoglobin subunit alpha-A (141 aa).

One can recognise a Globin domain in the interval 1 to 141; the sequence is VLSAADKTNV…VSTVLTAKYR (141 aa). O2 is bound at residue histidine 58. Histidine 87 is a heme b binding site.

This sequence belongs to the globin family. In terms of assembly, heterotetramer of two alpha chains and two beta chains. In terms of tissue distribution, red blood cells.

Its function is as follows. Involved in oxygen transport from the lung to the various peripheral tissues. This chain is Hemoglobin subunit alpha-A (HBAA), found in Eudynamys scolopaceus (Western koel).